Consider the following 84-residue polypeptide: Cell division topological specificity factor (84 aa).

The protein belongs to the MinE family.

In terms of biological role, prevents the cell division inhibition by proteins MinC and MinD at internal division sites while permitting inhibition at polar sites. This ensures cell division at the proper site by restricting the formation of a division septum at the midpoint of the long axis of the cell. The polypeptide is Cell division topological specificity factor (Pseudomonas syringae pv. tomato (strain ATCC BAA-871 / DC3000)).